The following is a 65-amino-acid chain: Neurotoxin BmK-M3 (65 aa).

Residues 2–64 (RDAYIAKPEN…VPIRVWGKCH (63 aa)) enclose the LCN-type CS-alpha/beta domain. 4 disulfide bridges follow: C12–C63, C16–C36, C22–C46, and C26–C48.

The protein belongs to the long (4 C-C) scorpion toxin superfamily. Sodium channel inhibitor family. Alpha subfamily. Expressed by the venom gland.

The protein localises to the secreted. Binds to sodium channels (Nav) and inhibits the inactivation of the activated channels, thereby blocking neuronal transmission. The protein is Neurotoxin BmK-M3 of Olivierus martensii (Manchurian scorpion).